We begin with the raw amino-acid sequence, 137 residues long: TM2 domain-containing protein DDB_G0287015 (137 aa).

The region spanning 9 to 57 is the TM2 domain; it reads QASLVVAYLLLIFLGFFGVHRFYVGRTISGVVYLLTGGIFGIGYIVDFF. Helical transmembrane passes span 12–32 and 39–59; these read LVVAYLLLIFLGFFGVHRFYV and VVYLLTGGIFGIGYIVDFFLL. The interval 106–137 is disordered; the sequence is IQPQQQQYYQQPYQQQQYQPQPYQPNSPQYQP.

Belongs to the TM2 family.

The protein resides in the membrane. This Dictyostelium discoideum (Social amoeba) protein is TM2 domain-containing protein DDB_G0287015.